A 206-amino-acid chain; its full sequence is Ras-related protein Rab-7a (206 aa).

15 to 22 serves as a coordination point for GTP; it reads GDSGVGKT. Serine 17 and serine 23 each carry phosphoserine. Phosphothreonine occurs at positions 34, 40, and 64. Residues 34–40 and 63–67 contribute to the GTP site; these read TQQYRAT and DTAGQ. The Effector region motif lies at 37 to 45; it reads YRATVGADF. Serine 72 is modified (phosphoserine). 2 positions are modified to phosphotyrosine: tyrosine 78 and tyrosine 88. GTP contacts are provided by residues 125–128 and 157–158; these read NKLD and AK. Residues cysteine 205 and cysteine 206 are each lipidated (S-geranylgeranyl cysteine).

Belongs to the small GTPase superfamily. Rab family.

It localises to the cytoplasmic vesicle. The protein resides in the phagosome membrane. Its subcellular location is the late endosome membrane. It is found in the lysosome membrane. The protein localises to the autophagosome membrane. It localises to the lipid droplet. The catalysed reaction is GTP + H2O = GDP + phosphate + H(+). Small GTPase which cycles between active GTP-bound and inactive GDP-bound states. In its active state, binds to a variety of effector proteins playing a key role in the regulation of endo-lysosomal trafficking. Governs early-to-late endosomal maturation, microtubule minus-end as well as plus-end directed endosomal migration and positioning, and endosome-lysosome transport through different protein-protein interaction cascades. Involved in lipophagy, a cytosolic lipase-independent autophagic pathway. Plays a role in phagocyte formation and acidification. The chain is Ras-related protein Rab-7a from Paramecium octaurelia.